The primary structure comprises 678 residues: Amino-acid acetyltransferase, mitochondrial (678 aa).

Residues 86-111 form a disordered region; sequence LKAQHPPKAQTEPTTGHSKGTVTQSL. A compositionally biased stretch (polar residues) spans 96-111; the sequence is TEPTTGHSKGTVTQSL. The 170-residue stretch at 499–668 folds into the N-acetyltransferase domain; that stretch reads NRPRLSLDDP…YEQVCRSIQP (170 aa).

Belongs to the acetyltransferase family.

It is found in the mitochondrion. The catalysed reaction is L-glutamate + acetyl-CoA = N-acetyl-L-glutamate + CoA + H(+). It functions in the pathway amino-acid biosynthesis; L-arginine biosynthesis; N(2)-acetyl-L-ornithine from L-glutamate: step 1/4. Functionally, N-acetylglutamate synthase involved in arginine biosynthesis. This chain is Amino-acid acetyltransferase, mitochondrial (arg2), found in Aspergillus oryzae (strain ATCC 42149 / RIB 40) (Yellow koji mold).